A 342-amino-acid chain; its full sequence is Hypoxia responsive morphology factor C (342 aa).

A Bipartite nuclear localization signal motif is present at residues 46–68 (RMKIPRRKSEYSSHDRLKRARKI). Residues 151–181 (ADDAWAYNAADMDTAVKFFSEAIYKAIESSP) form an RNA recognition motif (RRM)-like domain region.

The protein belongs to the hrmA family.

Its subcellular location is the nucleus. In terms of biological role, probably modulates the generation of the hypoxia-typic morphotype (called H-MORPH) with altered biofilm architecture that leads to increased host inflammation, rapid disease progression, and mortality in a murine model of invasive aspergillosis. In Aspergillus fumigatus (strain CBS 144.89 / FGSC A1163 / CEA10) (Neosartorya fumigata), this protein is Hypoxia responsive morphology factor C.